We begin with the raw amino-acid sequence, 366 residues long: Phospho-N-acetylmuramoyl-pentapeptide-transferase (366 aa).

A run of 10 helical transmembrane segments spans residues 25-45 (AGAA…AIIN), 70-90 (GTPT…SLLW), 93-113 (LSNV…AIGF), 134-154 (LGIE…MALA), 174-194 (FVIN…VGAG), 205-225 (GLAI…AYLA), 245-265 (LAVI…FNAP), 268-288 (AIFM…SIAV), 297-317 (VIVG…VFWF), and 343-363 (QVVI…LATL).

Belongs to the glycosyltransferase 4 family. MraY subfamily. Mg(2+) serves as cofactor.

It localises to the cell inner membrane. It carries out the reaction UDP-N-acetyl-alpha-D-muramoyl-L-alanyl-gamma-D-glutamyl-meso-2,6-diaminopimeloyl-D-alanyl-D-alanine + di-trans,octa-cis-undecaprenyl phosphate = di-trans,octa-cis-undecaprenyl diphospho-N-acetyl-alpha-D-muramoyl-L-alanyl-D-glutamyl-meso-2,6-diaminopimeloyl-D-alanyl-D-alanine + UMP. The protein operates within cell wall biogenesis; peptidoglycan biosynthesis. In terms of biological role, catalyzes the initial step of the lipid cycle reactions in the biosynthesis of the cell wall peptidoglycan: transfers peptidoglycan precursor phospho-MurNAc-pentapeptide from UDP-MurNAc-pentapeptide onto the lipid carrier undecaprenyl phosphate, yielding undecaprenyl-pyrophosphoryl-MurNAc-pentapeptide, known as lipid I. The protein is Phospho-N-acetylmuramoyl-pentapeptide-transferase of Agrobacterium fabrum (strain C58 / ATCC 33970) (Agrobacterium tumefaciens (strain C58)).